A 218-amino-acid polypeptide reads, in one-letter code: Adenylate kinase (218 aa).

An ATP-binding site is contributed by Gly12–Thr17. Residues Ser32–Val61 form an NMP region. Residues Thr33, Arg38, Gln59–Val61, Gly87–Arg90, and Gln94 each bind AMP. The interval Gly128 to Asp165 is LID. Residue Arg129 coordinates ATP. Zn(2+) contacts are provided by Cys132 and Cys135. Ser138–Tyr139 serves as a coordination point for ATP. 2 residues coordinate Zn(2+): Cys152 and Cys155. The AMP site is built by Arg162 and Arg173. ATP is bound at residue Gln201.

The protein belongs to the adenylate kinase family. In terms of assembly, monomer.

It is found in the cytoplasm. It carries out the reaction AMP + ATP = 2 ADP. It functions in the pathway purine metabolism; AMP biosynthesis via salvage pathway; AMP from ADP: step 1/1. Its function is as follows. Catalyzes the reversible transfer of the terminal phosphate group between ATP and AMP. Plays an important role in cellular energy homeostasis and in adenine nucleotide metabolism. The polypeptide is Adenylate kinase (Clostridium perfringens (strain 13 / Type A)).